Consider the following 281-residue polypeptide: Elongation factor Ts (281 aa).

Residues 86 to 89 (TDFV) form an involved in Mg(2+) ion dislocation from EF-Tu region.

Belongs to the EF-Ts family.

The protein localises to the cytoplasm. Its function is as follows. Associates with the EF-Tu.GDP complex and induces the exchange of GDP to GTP. It remains bound to the aminoacyl-tRNA.EF-Tu.GTP complex up to the GTP hydrolysis stage on the ribosome. This is Elongation factor Ts from Beutenbergia cavernae (strain ATCC BAA-8 / DSM 12333 / CCUG 43141 / JCM 11478 / NBRC 16432 / NCIMB 13614 / HKI 0122).